Here is a 258-residue protein sequence, read N- to C-terminus: C4b-binding protein beta chain (258 aa).

The signal sequence occupies residues 1 to 15 (MLCLVVCCLIWLISA). The 58-residue stretch at 18-75 (GSCSEPPPVNNSVFVGKETEEQILGIYLCIKGYHLVGKKSLVFDPSKEWNSTLPECLL) folds into the Sushi 1; atypical; lacks a Cys domain. Residues Asn-27, Asn-67, Asn-89, Asn-95, and Asn-114 are each glycosylated (N-linked (GlcNAc...) asparagine). Intrachain disulfides connect Cys-46-Cys-73, Cys-78-Cys-118, Cys-104-Cys-131, Cys-136-Cys-176, and Cys-162-Cys-188. Sushi domains are found at residues 76–133 (GHCP…ICRS) and 134–190 (RDCE…TCES). Asn-218 carries an N-linked (GlcNAc...) asparagine glycan.

As to quaternary structure, disulfide-linked complex of alpha and beta chains.

It localises to the secreted. Its function is as follows. Controls the classical pathway of complement activation. It binds as a cofactor to C3b/C4b inactivator (C3bINA), which then hydrolyzes the complement fragment C4b. It also accelerates the degradation of the C4bC2a complex (C3 convertase) by dissociating the complement fragment C2a. It also interacts with anticoagulant protein S and with serum amyloid P component. This is C4b-binding protein beta chain (C4bpb) from Rattus norvegicus (Rat).